The sequence spans 142 residues: Nucleoside diphosphate kinase (142 aa).

Lys-11, Phe-59, Arg-87, Thr-93, Arg-104, and Asn-114 together coordinate ATP. Residue His-117 is the Pros-phosphohistidine intermediate of the active site.

The protein belongs to the NDK family. As to quaternary structure, homotetramer. It depends on Mg(2+) as a cofactor.

It is found in the cytoplasm. It carries out the reaction a 2'-deoxyribonucleoside 5'-diphosphate + ATP = a 2'-deoxyribonucleoside 5'-triphosphate + ADP. It catalyses the reaction a ribonucleoside 5'-diphosphate + ATP = a ribonucleoside 5'-triphosphate + ADP. Major role in the synthesis of nucleoside triphosphates other than ATP. The ATP gamma phosphate is transferred to the NDP beta phosphate via a ping-pong mechanism, using a phosphorylated active-site intermediate. The polypeptide is Nucleoside diphosphate kinase (Photobacterium profundum (strain SS9)).